Reading from the N-terminus, the 254-residue chain is Uracil-DNA glycosylase (254 aa).

Aspartate 78 functions as the Proton acceptor in the catalytic mechanism.

It belongs to the uracil-DNA glycosylase (UDG) superfamily. UNG family.

The protein resides in the cytoplasm. The enzyme catalyses Hydrolyzes single-stranded DNA or mismatched double-stranded DNA and polynucleotides, releasing free uracil.. Functionally, excises uracil residues from the DNA which can arise as a result of misincorporation of dUMP residues by DNA polymerase or due to deamination of cytosine. The polypeptide is Uracil-DNA glycosylase (Bordetella petrii (strain ATCC BAA-461 / DSM 12804 / CCUG 43448)).